Reading from the N-terminus, the 803-residue chain is Nuclear factor of activated T-cells, cytoplasmic 1 (803 aa).

A calcineurin-binding region spans residues 101–106 (PRIEIT). The transactivation domain A (TAD-A) stretch occupies residues 109-199 (LGLHHNSSQF…CVSPKTTDPE (91 aa)). The span at 181–195 (PQTSPWQSPCVSPKT) shows a compositional bias: polar residues. Residues 181–279 (PQTSPWQSPC…GSPRVSVTDD (99 aa)) are disordered. Repeat copies occupy residues 184–200 (SPWQ…DPEE) and 214–230 (SPRH…VTEE). Positions 184-279 (SPWQSPCVSP…GSPRVSVTDD (96 aa)) are 3 X SP repeats. S214 and S218 each carry phosphoserine. Residues 214 to 231 (SPRHSPSTSPRTSVTEES) are compositionally biased toward low complexity. S226 carries the phosphoserine; by PKA modification. The Nuclear localization signal signature appears at 246-248 (KRK). Repeat 3 spans residues 263 to 279 (SPTPSPQGSPRVSVTDD). A Phosphoserine; by PKA modification is found at S275. Positions 291–302 (SAIVAAINALST) match the Nuclear export signal motif. The region spanning 389–571 (PSLPALDWQL…NPIECSQRSA (183 aa)) is the RHD domain. Residues 418 to 425 (RAHYETEG) mediate DNA binding. The Nuclear localization signal signature appears at 661–663 (KRK). Positions 723–803 (LMPGFPPRPQ…QPQVSPTSSG (81 aa)) are disordered. Pro residues predominate over residues 778–792 (SGVPPGPPQPPPPTL). A compositionally biased stretch (low complexity) spans 793–803 (LQPQVSPTSSG).

In terms of assembly, member of the multicomponent NFATC transcription complex that consists of at least two components, a pre-existing cytoplasmic component NFATC2 and an inducible nuclear component NFATC1. Other members such as NFATC4, NFATC3 or members of the activating protein-1 family, MAF, GATA4 and Cbp/p300 can also bind the complex. NFATC proteins bind to DNA as monomers. Interacts with HOMER2 and HOMER3; this interaction may compete with calcineurin/PPP3CA-binding and hence prevent NFATC1 dephosphorylation and activation. Interacts with TLE6/GRG6. Post-translationally, phosphorylated by NFATC-kinase and GSK3B; phosphorylation induces NFATC1 nuclear exit and dephosphorylation by calcineurin promotes nuclear import. Phosphorylation by PKA and DYRK2 negatively modulates nuclear accumulation, and promotes subsequent phosphorylation by GSK3B or casein kinase 1.

Its subcellular location is the cytoplasm. The protein localises to the nucleus. In terms of biological role, plays a role in the inducible expression of cytokine genes in T-cells, especially in the induction of the IL-2 or IL-4 gene transcription. Also controls gene expression in embryonic cardiac cells. Could regulate not only the activation and proliferation but also the differentiation and programmed death of T-lymphocytes as well as lymphoid and non-lymphoid cells. Required for osteoclastogenesis and regulates many genes important for osteoclast differentiation and function. This Bos taurus (Bovine) protein is Nuclear factor of activated T-cells, cytoplasmic 1.